Consider the following 688-residue polypeptide: Potassium-transporting ATPase ATP-binding subunit (688 aa).

Transmembrane regions (helical) follow at residues 35–55 (VMFV…AMLA), 62–82 (ALFT…ANFA), 219–239 (IALT…CVTL), and 260–280 (VLIA…LSAI). Aspartate 313 functions as the 4-aspartylphosphate intermediate in the catalytic mechanism. ATP-binding positions include aspartate 350, glutamate 354, 383-390 (FSAMTRMS), and lysine 401. Mg(2+)-binding residues include aspartate 524 and aspartate 528. Transmembrane regions (helical) follow at residues 594 to 614 (FAII…LNIM), 622 to 642 (AVLS…PLAL), and 667 to 687 (GLIA…LLIL).

Belongs to the cation transport ATPase (P-type) (TC 3.A.3) family. Type IA subfamily. As to quaternary structure, the system is composed of three essential subunits: KdpA, KdpB and KdpC.

It is found in the cell inner membrane. It carries out the reaction K(+)(out) + ATP + H2O = K(+)(in) + ADP + phosphate + H(+). Part of the high-affinity ATP-driven potassium transport (or Kdp) system, which catalyzes the hydrolysis of ATP coupled with the electrogenic transport of potassium into the cytoplasm. This subunit is responsible for energy coupling to the transport system and for the release of the potassium ions to the cytoplasm. This chain is Potassium-transporting ATPase ATP-binding subunit, found in Photorhabdus laumondii subsp. laumondii (strain DSM 15139 / CIP 105565 / TT01) (Photorhabdus luminescens subsp. laumondii).